A 54-amino-acid polypeptide reads, in one-letter code: Ribulose bisphosphate carboxylase large chain (54 aa).

A propeptide spanning residues 1 to 2 (MS) is cleaved from the precursor. P3 bears the N-acetylproline mark. The residue at position 14 (K14) is an N6,N6,N6-trimethyllysine.

The protein belongs to the RuBisCO large chain family. Type I subfamily. As to quaternary structure, heterohexadecamer of 8 large chains and 8 small chains.

It is found in the plastid. The protein localises to the chloroplast. It carries out the reaction 2 (2R)-3-phosphoglycerate + 2 H(+) = D-ribulose 1,5-bisphosphate + CO2 + H2O. It catalyses the reaction D-ribulose 1,5-bisphosphate + O2 = 2-phosphoglycolate + (2R)-3-phosphoglycerate + 2 H(+). RuBisCO catalyzes two reactions: the carboxylation of D-ribulose 1,5-bisphosphate, the primary event in carbon dioxide fixation, as well as the oxidative fragmentation of the pentose substrate in the photorespiration process. Both reactions occur simultaneously and in competition at the same active site. This Magnolia liliiflora (Mulan magnolia) protein is Ribulose bisphosphate carboxylase large chain (rbcL).